The chain runs to 333 residues: L-lactate dehydrogenase B chain (333 aa).

Residues 29 to 57 and arginine 99 contribute to the NAD(+) site; that span reads GQVG…WEDK. Residues arginine 106, asparagine 138, and arginine 169 each contribute to the substrate site. Position 138 (asparagine 138) interacts with NAD(+). Histidine 193 acts as the Proton acceptor in catalysis. Residue threonine 248 participates in substrate binding.

This sequence belongs to the LDH/MDH superfamily. LDH family. As to quaternary structure, homotetramer.

The protein resides in the cytoplasm. It catalyses the reaction (S)-lactate + NAD(+) = pyruvate + NADH + H(+). The protein operates within fermentation; pyruvate fermentation to lactate; (S)-lactate from pyruvate: step 1/1. Its function is as follows. Interconverts simultaneously and stereospecifically pyruvate and lactate with concomitant interconversion of NADH and NAD(+). The sequence is that of L-lactate dehydrogenase B chain (LDHB) from Trachemys scripta elegans (Red-eared slider turtle).